The following is a 340-amino-acid chain: Peroxisomal adenine nucleotide transporter 1 (340 aa).

Solcar repeat units lie at residues 4 to 119, 133 to 218, and 236 to 320; these read ENAV…VRKH, FSTP…LREA, and LSPG…LTKM. 6 consecutive transmembrane segments (helical) span residues 6 to 26, 96 to 116, 139 to 159, 190 to 210, 242 to 262, and 293 to 313; these read AVIG…LDLA, GSST…YTLV, LVLG…INVV, GFWA…ITYA, FVMG…LIIA, and WKGL…LFMF.

The protein belongs to the mitochondrial carrier (TC 2.A.29) family.

It localises to the peroxisome membrane. Its function is as follows. Adenine nucleotide transporter involved in the uniport of ATP and adenine nucleotide hetero-exchange transport between the cytosol and the peroxisomal lumen. This transport is accompanied by a proton transport from the peroxisomal lumen to the cytosol. Transport of ATP into the peroxisome is required for beta-oxidation of medium-chain fatty acids. This Eremothecium gossypii (strain ATCC 10895 / CBS 109.51 / FGSC 9923 / NRRL Y-1056) (Yeast) protein is Peroxisomal adenine nucleotide transporter 1 (ANT1).